Reading from the N-terminus, the 342-residue chain is Cytosolic Fe-S cluster assembly factor NBP35 (342 aa).

4 residues coordinate [4Fe-4S] cluster: Cys33, Cys47, Cys50, and Cys56. 86–93 contributes to the ATP binding site; sequence GKGGVGKS. [4Fe-4S] cluster contacts are provided by Cys259 and Cys262.

The protein belongs to the Mrp/NBP35 ATP-binding proteins family. NUBP1/NBP35 subfamily. As to quaternary structure, heterotetramer of 2 NBP35 and 2 CFD1 chains. The cofactor is [4Fe-4S] cluster.

The protein resides in the cytoplasm. Its function is as follows. Component of the cytosolic iron-sulfur (Fe/S) protein assembly (CIA) machinery. Required for maturation of extramitochondrial Fe-S proteins. The NBP35-CFD1 heterotetramer forms a Fe-S scaffold complex, mediating the de novo assembly of an Fe-S cluster and its transfer to target apoproteins. The sequence is that of Cytosolic Fe-S cluster assembly factor NBP35 from Gibberella zeae (strain ATCC MYA-4620 / CBS 123657 / FGSC 9075 / NRRL 31084 / PH-1) (Wheat head blight fungus).